Reading from the N-terminus, the 312-residue chain is Ribosomal RNA small subunit methyltransferase H (312 aa).

S-adenosyl-L-methionine contacts are provided by residues 36–38, Asp55, Phe81, Asp103, and Gln110; that span reads GGH.

This sequence belongs to the methyltransferase superfamily. RsmH family.

Its subcellular location is the cytoplasm. It carries out the reaction cytidine(1402) in 16S rRNA + S-adenosyl-L-methionine = N(4)-methylcytidine(1402) in 16S rRNA + S-adenosyl-L-homocysteine + H(+). Its function is as follows. Specifically methylates the N4 position of cytidine in position 1402 (C1402) of 16S rRNA. The chain is Ribosomal RNA small subunit methyltransferase H from Marinomonas sp. (strain MWYL1).